The following is a 327-amino-acid chain: tRNA dimethylallyltransferase (327 aa).

14–21 (GPTASGKT) serves as a coordination point for ATP. Substrate is bound at residue 16–21 (TASGKT). Interaction with substrate tRNA stretches follow at residues 39 to 42 (DSAL) and 163 to 167 (QRIQR).

It belongs to the IPP transferase family. As to quaternary structure, monomer. Requires Mg(2+) as cofactor.

It carries out the reaction adenosine(37) in tRNA + dimethylallyl diphosphate = N(6)-dimethylallyladenosine(37) in tRNA + diphosphate. Functionally, catalyzes the transfer of a dimethylallyl group onto the adenine at position 37 in tRNAs that read codons beginning with uridine, leading to the formation of N6-(dimethylallyl)adenosine (i(6)A). The chain is tRNA dimethylallyltransferase from Xanthomonas campestris pv. campestris (strain 8004).